We begin with the raw amino-acid sequence, 300 residues long: GTPase Era (300 aa).

The region spanning arginine 8–glutamate 176 is the Era-type G domain. Residues glycine 16–serine 23 form a G1 region. Glycine 16–serine 23 contacts GTP. A G2 region spans residues glutamine 42–histidine 46. Positions aspartate 63 to glycine 66 are G3. GTP is bound by residues aspartate 63–methionine 67 and asparagine 125–aspartate 128. Residues asparagine 125–aspartate 128 are G4. Residues isoleucine 155–alanine 157 form a G5 region. The KH type-2 domain maps to valine 199–glycine 283.

This sequence belongs to the TRAFAC class TrmE-Era-EngA-EngB-Septin-like GTPase superfamily. Era GTPase family. In terms of assembly, monomer.

The protein resides in the cytoplasm. The protein localises to the cell inner membrane. Its function is as follows. An essential GTPase that binds both GDP and GTP, with rapid nucleotide exchange. Plays a role in 16S rRNA processing and 30S ribosomal subunit biogenesis and possibly also in cell cycle regulation and energy metabolism. The sequence is that of GTPase Era from Pseudomonas putida (strain W619).